The following is a 425-amino-acid chain: Serine--tRNA ligase (425 aa).

233 to 235 (TAE) serves as a coordination point for L-serine. Residue 264–266 (RRE) participates in ATP binding. Residue Glu287 participates in L-serine binding. 351–354 (EISS) contributes to the ATP binding site. L-serine is bound at residue Ser385.

It belongs to the class-II aminoacyl-tRNA synthetase family. Type-1 seryl-tRNA synthetase subfamily. Homodimer. The tRNA molecule binds across the dimer.

Its subcellular location is the cytoplasm. The catalysed reaction is tRNA(Ser) + L-serine + ATP = L-seryl-tRNA(Ser) + AMP + diphosphate + H(+). It carries out the reaction tRNA(Sec) + L-serine + ATP = L-seryl-tRNA(Sec) + AMP + diphosphate + H(+). It participates in aminoacyl-tRNA biosynthesis; selenocysteinyl-tRNA(Sec) biosynthesis; L-seryl-tRNA(Sec) from L-serine and tRNA(Sec): step 1/1. Catalyzes the attachment of serine to tRNA(Ser). Is also able to aminoacylate tRNA(Sec) with serine, to form the misacylated tRNA L-seryl-tRNA(Sec), which will be further converted into selenocysteinyl-tRNA(Sec). This is Serine--tRNA ligase from Synechococcus sp. (strain CC9605).